The sequence spans 893 residues: Nitrate reductase [NADPH] (893 aa).

The segment at 1 to 83 (MSVTTQQPAV…KPTPDAHVPR (83 aa)) is disordered. Positions 55-65 (PDFPLPPPANP) are enriched in pro residues. Basic and acidic residues predominate over residues 71–83 (DIDKPTPDAHVPR). Residue cysteine 170 participates in Mo-molybdopterin binding. In terms of domain architecture, Cytochrome b5 heme-binding spans 536 to 611 (NRIVELDELK…MPAYHIGTLS (76 aa)). Positions 571 and 594 each coordinate heme. Residues 641-752 (RTWSKALLSS…KGPIGKFEYL (112 aa)) enclose the FAD-binding FR-type domain. Residues 695–698 (RSYT), 712–716 (LIKIY), 726–728 (KMT), serine 776, and threonine 779 each bind FAD. 863 to 872 (LVLVCGPEGL) lines the NADP(+) pocket.

It belongs to the nitrate reductase family. Homodimer. FAD serves as cofactor. The cofactor is heme. It depends on Mo-molybdopterin as a cofactor.

It catalyses the reaction nitrite + NADP(+) + H2O = nitrate + NADPH + H(+). Functionally, nitrate reductase is a key enzyme involved in the first step of nitrate assimilation in plants, fungi and bacteria. The protein is Nitrate reductase [NADPH] (NIAD) of Leptosphaeria maculans (Blackleg fungus).